A 433-amino-acid polypeptide reads, in one-letter code: MTCDKEKTRGIRPGDIAVVVGTGRSGVAAARLLHAKGARVRVLERDAANVPATFAEWAAGAGVEIVCGAHDAAHFADAAVVVPSPGVAVATLRPYLPATGGPEVMAEMELAWRELSGEPVIAVTGTSGKTTTVSLCAHMLRTQGLSVFLGGNIGTPLCEYVLEGKRADVLVIEISSFQLQTCSTFRPRVAMLLNITANHLDYHADMQEYIDAKFRLFRCQDEDDLAVFGEGLAPLVDRYGVKARRVTFRATDRFAESRLFGAHNRANAEAAWTAAREFGVTLENALQAVATFAPMPHRLEQVAERGGVLYVNDSKCTTVSALRVALEAFDRPVLLLAGGKFKGGDLEGLIPLVRERVRAVMLFGASREVFEAAWRDVVPMTWDATLEEAVRRAASAARQGEVVLMAPATASFDLFRNYGHRGDVFRAAVESLA.

125–131 (GTSGKTT) lines the ATP pocket.

Belongs to the MurCDEF family.

It localises to the cytoplasm. It carries out the reaction UDP-N-acetyl-alpha-D-muramoyl-L-alanine + D-glutamate + ATP = UDP-N-acetyl-alpha-D-muramoyl-L-alanyl-D-glutamate + ADP + phosphate + H(+). The protein operates within cell wall biogenesis; peptidoglycan biosynthesis. In terms of biological role, cell wall formation. Catalyzes the addition of glutamate to the nucleotide precursor UDP-N-acetylmuramoyl-L-alanine (UMA). In Nitratidesulfovibrio vulgaris (strain ATCC 29579 / DSM 644 / CCUG 34227 / NCIMB 8303 / VKM B-1760 / Hildenborough) (Desulfovibrio vulgaris), this protein is UDP-N-acetylmuramoylalanine--D-glutamate ligase.